We begin with the raw amino-acid sequence, 183 residues long: UPF0397 protein stu0306/stu0307 (183 aa).

The next 5 membrane-spanning stretches (helical) occupy residues 11 to 31 (ATGI…IPIF), 44 to 64 (VLFS…GFIG), 74 to 94 (GDIS…IGLF), 111 to 131 (IWFN…VTPI), and 149 to 169 (FVAG…LLAI).

This sequence belongs to the UPF0397 family.

The protein localises to the cell membrane. This Streptococcus thermophilus (strain ATCC BAA-250 / LMG 18311) protein is UPF0397 protein stu0306/stu0307.